A 146-amino-acid polypeptide reads, in one-letter code: Decarboxylase dmxR15 (146 aa).

The EthD domain maps to 31–126 (PGMSEGDYRN…MHDHEVFADT (96 aa)).

It belongs to the tpcK family.

The enzyme catalyses atrochrysone carboxylate + H(+) = atrochrysone + CO2. Its pathway is secondary metabolite biosynthesis. Functionally, decarboxylase; part of the gene cluster that mediates the biosynthesis of the dimeric xanthones cryptosporioptides. The pathway begins with the synthesis of atrochrysone thioester by the polyketide synthase dmx-nrPKS. The atrochrysone carboxyl ACP thioesterase dmxR1 then breaks the thioester bond and releases the atrochrysone carboxylic acid from dmx-nrPKS. Atrochrysone carboxylic acid is decarboxylated by the decarboxylase dmxR15, and oxidized by the anthrone oxygenase dmxR16 to yield emodin. Emodin is then reduced to emodin hydroquinone by the oxidoreductase dmxR7. A-ring reduction by the short chain dehydrogenase dmxR18, dehydration by the scytalone dehydratase-like protein dmxR17 and probable spontaneous re-oxidation, results in overall deoxygenation to chrysophanol. Baeyer-Villiger oxidation by the Baeyer-Villiger monooxygenase (BVMO) dmxR6 then yields monodictylactone in equilibrium with monodictyphenone. In the case of the cryptosporioptides biosynthesis, monodictylactone is reduced at C-12 to an alcohol (by the short chain dehydrogenases dmxR12 or dmxR8) and hydroxylated at C-5 by dmxR9, yielding the electron-rich aromatic which could eliminate H(2)O to form the ortho-quinonemethide, followed by tautomerisation to paraquinone and complete the formal reduction to produce the 10-methylgroup. Conjugate addition of C-4a-OH to the resulting paraquinone by the monooxygenase dmxR10 then gives cyclohexadienone, which is then reduced at C-5 by the short chain dehydrogenase dmxR3 to give the dihydroxanthone. The 6,7-epoxide in the cryptosporioptides could be introduced by the cytochrome P450 monooxygenase dmxL3. The highly reducing PKS dmxL2 manufactures butyrate, which is further carboxylated by dmxL1 to form ethylmalonate. It is not yet clear whether the carboxylation occurs while the butyrate is attached to the ACP of dmxL2, but this unusual fungal metabolite could then be esterified to O-5 by the O-acetyltransferase dmxR13. Finally, dimerization performed by dmxR5 gives the observed dimers cryptosporioptides A, B and C as the final products of the pathway. This chain is Decarboxylase dmxR15, found in Cryptosporiopsis sp. (strain 8999).